We begin with the raw amino-acid sequence, 156 residues long: Small ribosomal subunit protein uS7 (156 aa).

This sequence belongs to the universal ribosomal protein uS7 family. Part of the 30S ribosomal subunit. Contacts proteins S9 and S11.

Its function is as follows. One of the primary rRNA binding proteins, it binds directly to 16S rRNA where it nucleates assembly of the head domain of the 30S subunit. Is located at the subunit interface close to the decoding center, probably blocks exit of the E-site tRNA. The polypeptide is Small ribosomal subunit protein uS7 (Gloeothece citriformis (strain PCC 7424) (Cyanothece sp. (strain PCC 7424))).